The primary structure comprises 356 residues: Arginine kinase Lit v 2 (356 aa).

Residues 9-91 (KLEAGFKKLE…FDPIIEDYHV (83 aa)) enclose the Phosphagen kinase N-terminal domain. An L-arginine-binding site is contributed by 64–68 (GVGIY). The region spanning 119–356 (FVISTRVRCG…LELIKMEKEM (238 aa)) is the Phosphagen kinase C-terminal domain. Residues 122–126 (STRVR) and His185 contribute to the ATP site. An L-arginine-binding site is contributed by Glu225. Arg229 contacts ATP. Cys271 is a binding site for L-arginine. ATP is bound by residues 280–284 (RASVH) and 309–314 (RGTRGE). Position 314 (Glu314) interacts with L-arginine.

It belongs to the ATP:guanido phosphotransferase family. In terms of tissue distribution, expressed in muscle (at protein level). Expressed in muscle, heart, nerve, stomach and hemocytes, with the highest expression in muscle. Very low expression in eyestalk and intestine. Not expressed in hepatopancreas, gill and skin.

The catalysed reaction is L-arginine + ATP = N(omega)-phospho-L-arginine + ADP + H(+). No change in activity after supplementation with 10 mM glucose. However, activity decreases significantly when glucose concentration is higher than 50 mM and almost all activity is lost with 200 mM glucose. Activity is significantly increased after treatment with 10 mM and 50 mM ATP. However, activity drops significantly with 200 mM ATP. Inhibited by 10-200 mM alpha-ketoglutarate. No change in activity after incubation with 10-200 mM L-citrulline, L-ornaline or glycerol. Functionally, catalyzes the reversible transfer of high energy ATP gamma-phosphate group to L-arginine. The protein is Arginine kinase Lit v 2 of Penaeus vannamei (Whiteleg shrimp).